Here is a 45-residue protein sequence, read N- to C-terminus: Large ribosomal subunit protein bL34 (45 aa).

This sequence belongs to the bacterial ribosomal protein bL34 family.

The polypeptide is Large ribosomal subunit protein bL34 (Opitutus terrae (strain DSM 11246 / JCM 15787 / PB90-1)).